The sequence spans 37 residues: Esculentin-2L (37 aa).

A disulfide bridge links Cys31 with Cys37.

In terms of tissue distribution, expressed by the skin glands.

The protein localises to the secreted. Functionally, antibacterial activity against Gram-positive bacterium S.aureus and Gram-negative bacterium E.coli. Has activity against C.albicans. The sequence is that of Esculentin-2L from Rana luteiventris (Columbia spotted frog).